Reading from the N-terminus, the 283-residue chain is Bifunctional protein FolD (283 aa).

NADP(+) is bound by residues 165–167 (GAS), serine 190, and isoleucine 231.

This sequence belongs to the tetrahydrofolate dehydrogenase/cyclohydrolase family. In terms of assembly, homodimer.

It carries out the reaction (6R)-5,10-methylene-5,6,7,8-tetrahydrofolate + NADP(+) = (6R)-5,10-methenyltetrahydrofolate + NADPH. It catalyses the reaction (6R)-5,10-methenyltetrahydrofolate + H2O = (6R)-10-formyltetrahydrofolate + H(+). It functions in the pathway one-carbon metabolism; tetrahydrofolate interconversion. Catalyzes the oxidation of 5,10-methylenetetrahydrofolate to 5,10-methenyltetrahydrofolate and then the hydrolysis of 5,10-methenyltetrahydrofolate to 10-formyltetrahydrofolate. The protein is Bifunctional protein FolD of Bordetella bronchiseptica (strain ATCC BAA-588 / NCTC 13252 / RB50) (Alcaligenes bronchisepticus).